The primary structure comprises 256 residues: Protein CC2D2B homolog (256 aa).

A disordered region spans residues 1–24 (MSEEMDNVTAEEITDKHLQKDLDA). Over residues 13 to 22 (ITDKHLQKDL) the composition is skewed to basic and acidic residues. Coiled-coil stretches lie at residues 136 to 159 (DLLK…KANI) and 194 to 214 (EIYK…EEGK).

The sequence is that of Protein CC2D2B homolog from Macaca fascicularis (Crab-eating macaque).